The chain runs to 154 residues: Nascent polypeptide-associated complex subunit beta (154 aa).

The region spanning glutamate 34–isoleucine 99 is the NAC-A/B domain. The segment at lysine 125–glutamate 154 is disordered.

This sequence belongs to the NAC-beta family. Part of the nascent polypeptide-associated complex (NAC), consisting of EGD2 and EGD1. NAC associates with ribosomes via EGD1.

It is found in the cytoplasm. The protein localises to the nucleus. Functionally, component of the nascent polypeptide-associated complex (NAC), a dynamic component of the ribosomal exit tunnel, protecting the emerging polypeptides from interaction with other cytoplasmic proteins to ensure appropriate nascent protein targeting. The NAC complex also promotes mitochondrial protein import by enhancing productive ribosome interactions with the outer mitochondrial membrane and blocks the inappropriate interaction of ribosomes translating non-secretory nascent polypeptides with translocation sites in the membrane of the endoplasmic reticulum. EGD1 may act as a transcription factor that exert a negative effect on the expression of several genes that are transcribed by RNA polymerase II. This Debaryomyces hansenii (strain ATCC 36239 / CBS 767 / BCRC 21394 / JCM 1990 / NBRC 0083 / IGC 2968) (Yeast) protein is Nascent polypeptide-associated complex subunit beta (EGD1).